The following is a 260-amino-acid chain: Proteasome subunit alpha (260 aa).

The disordered stretch occupies residues 241–260; that stretch reads VEAEEVPEKEEDYSELDSNY. A compositionally biased stretch (acidic residues) spans 242–260; the sequence is EAEEVPEKEEDYSELDSNY.

Belongs to the peptidase T1A family. As to quaternary structure, the 20S proteasome core is composed of 14 alpha and 14 beta subunits that assemble into four stacked heptameric rings, resulting in a barrel-shaped structure. The two inner rings, each composed of seven catalytic beta subunits, are sandwiched by two outer rings, each composed of seven alpha subunits. The catalytic chamber with the active sites is on the inside of the barrel. Has a gated structure, the ends of the cylinder being occluded by the N-termini of the alpha-subunits. Is capped at one or both ends by the proteasome regulatory ATPase, PAN.

The protein localises to the cytoplasm. Its activity is regulated as follows. The formation of the proteasomal ATPase PAN-20S proteasome complex, via the docking of the C-termini of PAN into the intersubunit pockets in the alpha-rings, triggers opening of the gate for substrate entry. Interconversion between the open-gate and close-gate conformations leads to a dynamic regulation of the 20S proteasome proteolysis activity. Its function is as follows. Component of the proteasome core, a large protease complex with broad specificity involved in protein degradation. In Thermococcus sibiricus (strain DSM 12597 / MM 739), this protein is Proteasome subunit alpha.